A 281-amino-acid polypeptide reads, in one-letter code: Pantothenate synthetase (281 aa).

30 to 37 contributes to the ATP binding site; sequence MGYYHAGH. Residue His-37 is the Proton donor of the active site. Gln-61 lines the (R)-pantoate pocket. Gln-61 provides a ligand contact to beta-alanine. Residue 147–150 participates in ATP binding; that stretch reads GEKD. Gln-153 lines the (R)-pantoate pocket. ATP is bound by residues Val-176 and 184–187; that span reads MSSR.

Belongs to the pantothenate synthetase family. In terms of assembly, homodimer.

It is found in the cytoplasm. It carries out the reaction (R)-pantoate + beta-alanine + ATP = (R)-pantothenate + AMP + diphosphate + H(+). Its pathway is cofactor biosynthesis; (R)-pantothenate biosynthesis; (R)-pantothenate from (R)-pantoate and beta-alanine: step 1/1. In terms of biological role, catalyzes the condensation of pantoate with beta-alanine in an ATP-dependent reaction via a pantoyl-adenylate intermediate. In Oleidesulfovibrio alaskensis (strain ATCC BAA-1058 / DSM 17464 / G20) (Desulfovibrio alaskensis), this protein is Pantothenate synthetase.